The following is a 283-amino-acid chain: NADPH-dependent 7-cyano-7-deazaguanine reductase (283 aa).

90 to 92 (IES) is a binding site for substrate. 92–93 (SK) is a binding site for NADPH. Residue cysteine 190 is the Thioimide intermediate of the active site. Catalysis depends on aspartate 197, which acts as the Proton donor. A substrate-binding site is contributed by 229–230 (HE). 258–259 (RG) contributes to the NADPH binding site.

This sequence belongs to the GTP cyclohydrolase I family. QueF type 2 subfamily. In terms of assembly, homodimer.

It is found in the cytoplasm. The catalysed reaction is 7-aminomethyl-7-carbaguanine + 2 NADP(+) = 7-cyano-7-deazaguanine + 2 NADPH + 3 H(+). The protein operates within tRNA modification; tRNA-queuosine biosynthesis. Its function is as follows. Catalyzes the NADPH-dependent reduction of 7-cyano-7-deazaguanine (preQ0) to 7-aminomethyl-7-deazaguanine (preQ1). The protein is NADPH-dependent 7-cyano-7-deazaguanine reductase of Dechloromonas aromatica (strain RCB).